Here is a 397-residue protein sequence, read N- to C-terminus: Putative odorant receptor 83c (397 aa).

At Met1–Arg39 the chain is on the cytoplasmic side. The chain crosses the membrane as a helical span at residues Thr40–Asn60. The Extracellular segment spans residues Asn61–Lys70. A helical membrane pass occupies residues Ala71–Leu90. The Cytoplasmic portion of the chain corresponds to Lys91–Asn136. A helical transmembrane segment spans residues Gly137–Gly157. Over Thr158–Thr186 the chain is Extracellular. Residues Val187–Leu207 traverse the membrane as a helical segment. Topologically, residues Thr208–Gln282 are cytoplasmic. The chain crosses the membrane as a helical span at residues Val283–Ser299. At Ser300 to Ser305 the chain is on the extracellular side. The helical transmembrane segment at Ala306–Leu326 threads the bilayer. Residues Glu327 to Asn365 lie on the Cytoplasmic side of the membrane. A helical membrane pass occupies residues Ile366–Ile386. Over Tyr387 to Ala397 the chain is Extracellular.

This sequence belongs to the insect chemoreceptor superfamily. Heteromeric odorant receptor channel (TC 1.A.69) family. Or67d subfamily. Interacts with Orco. Complexes exist early in the endomembrane system in olfactory sensory neurons (OSNs), coupling these complexes to the conserved ciliary trafficking pathway. Expressed in olfactory sensory neurons in the antenna.

Its subcellular location is the cell membrane. Odorant receptor which mediates acceptance or avoidance behavior, depending on its substrates. The odorant receptor repertoire encodes a large collection of odor stimuli that vary widely in identity, intensity, and duration. May form a complex with Orco to form odorant-sensing units, providing sensitive and prolonged odorant signaling and calcium permeability. This is Putative odorant receptor 83c (Or83c) from Drosophila melanogaster (Fruit fly).